The sequence spans 528 residues: NAD(P)H-quinone oxidoreductase chain 4 1 (528 aa).

14 consecutive transmembrane segments (helical) span residues 7-27 (FPWL…IPLI), 32-52 (WVRW…AYVF), 86-106 (LSLP…VAAW), 114-134 (LFFF…LAQD), 136-156 (LLFF…ISIW), 168-188 (FILY…AMAF), 208-228 (ALEL…LPIF), 242-262 (SAPI…YGLI), 276-296 (FAPV…LAAF), 310-330 (IAHM…GING), 331-351 (AVLQ…LTGI), 375-395 (FALF…SGFV), 417-437 (GIAL…LSML), and 463-483 (MAVA…PRLA).

The protein belongs to the complex I subunit 4 family.

It is found in the cellular thylakoid membrane. It catalyses the reaction a plastoquinone + NADH + (n+1) H(+)(in) = a plastoquinol + NAD(+) + n H(+)(out). The catalysed reaction is a plastoquinone + NADPH + (n+1) H(+)(in) = a plastoquinol + NADP(+) + n H(+)(out). In terms of biological role, NDH-1 shuttles electrons from NAD(P)H, via FMN and iron-sulfur (Fe-S) centers, to quinones in the respiratory chain. The immediate electron acceptor for the enzyme in this species is believed to be plastoquinone. Couples the redox reaction to proton translocation (for every two electrons transferred, four hydrogen ions are translocated across the cytoplasmic membrane), and thus conserves the redox energy in a proton gradient. The sequence is that of NAD(P)H-quinone oxidoreductase chain 4 1 from Synechococcus sp. (strain JA-2-3B'a(2-13)) (Cyanobacteria bacterium Yellowstone B-Prime).